The primary structure comprises 388 residues: Autophagy-related protein 21 (388 aa).

WD repeat units lie at residues 179–219 (CHRS…KVHE) and 224–263 (SYTA…RRRS). The L/FRRG motif signature appears at 220–224 (FRRGS).

This sequence belongs to the WD repeat PROPPIN family.

The protein localises to the cytoplasm. Its subcellular location is the membrane. It localises to the vacuole membrane. Involved in peroxisome sequestration to the vacuole during macropexophagy. Also required for microautophagy. This is Autophagy-related protein 21 (ATG21) from Pichia angusta (Yeast).